Reading from the N-terminus, the 542-residue chain is Chaperonin GroEL (542 aa).

Residues 29 to 32 (TLGP), Lys50, 86 to 90 (DGTTT), Gly414, and Asp494 each bind ATP.

It belongs to the chaperonin (HSP60) family. Forms a cylinder of 14 subunits composed of two heptameric rings stacked back-to-back. Interacts with the co-chaperonin GroES.

The protein localises to the cytoplasm. It carries out the reaction ATP + H2O + a folded polypeptide = ADP + phosphate + an unfolded polypeptide.. In terms of biological role, together with its co-chaperonin GroES, plays an essential role in assisting protein folding. The GroEL-GroES system forms a nano-cage that allows encapsulation of the non-native substrate proteins and provides a physical environment optimized to promote and accelerate protein folding. The sequence is that of Chaperonin GroEL from Cytophaga hutchinsonii (strain ATCC 33406 / DSM 1761 / CIP 103989 / NBRC 15051 / NCIMB 9469 / D465).